We begin with the raw amino-acid sequence, 207 residues long: Large ribosomal subunit protein uL18 (207 aa).

This sequence belongs to the universal ribosomal protein uL18 family. As to quaternary structure, part of the 50S ribosomal subunit. Contacts the 5S and 23S rRNAs.

This is one of the proteins that bind and probably mediate the attachment of the 5S RNA into the large ribosomal subunit, where it forms part of the central protuberance. In Caldivirga maquilingensis (strain ATCC 700844 / DSM 13496 / JCM 10307 / IC-167), this protein is Large ribosomal subunit protein uL18.